A 201-amino-acid chain; its full sequence is Protein GrpE (201 aa).

The protein belongs to the GrpE family. In terms of assembly, homodimer.

The protein resides in the cytoplasm. Its function is as follows. Participates actively in the response to hyperosmotic and heat shock by preventing the aggregation of stress-denatured proteins, in association with DnaK and GrpE. It is the nucleotide exchange factor for DnaK and may function as a thermosensor. Unfolded proteins bind initially to DnaJ; upon interaction with the DnaJ-bound protein, DnaK hydrolyzes its bound ATP, resulting in the formation of a stable complex. GrpE releases ADP from DnaK; ATP binding to DnaK triggers the release of the substrate protein, thus completing the reaction cycle. Several rounds of ATP-dependent interactions between DnaJ, DnaK and GrpE are required for fully efficient folding. The polypeptide is Protein GrpE (Shewanella frigidimarina (strain NCIMB 400)).